Consider the following 395-residue polypeptide: Thyroid hormone receptor beta (395 aa).

The tract at residues 1-31 (MSEQADKCNSRWKDEAMQNGYIPSYLDKDEL) is modulating. Residues 29 to 106 (DELCVVCGDK…VGMATDLVLD (78 aa)) constitute a DNA-binding region (nuclear receptor). Zn(2+)-binding residues include Cys32, Cys35, Cys49, Cys52, Cys70, Cys76, Cys86, and Cys89. NR C4-type zinc fingers lie at residues 32–52 (CVVC…CEGC) and 70–89 (CKYE…CQEC). The NR LBD domain maps to 142–395 (EEWEMIRVVT…PPLFLEVFED (254 aa)). Residues Arg216, Asn265, and His369 each contribute to the 3,3',5-triiodo-L-thyronine site.

This sequence belongs to the nuclear hormone receptor family. NR1 subfamily. Interacts (via the ligand-binding domain) with ncoa2. As to expression, widely expressed in a range of adult tissues including the brain, eye, fin, gill, intestine, liver, swim bladder and ovary. In the eye, expressed in the outer nuclear layer of the retina.

It localises to the nucleus. Its function is as follows. Nuclear hormone receptor that can act as a repressor or activator of transcription. High affinity receptor for the thyroid gland hormone triiodothyronine (T3). Transactivating activity is ligand-dependent, and is repressed in the absence of T3. The protein is Thyroid hormone receptor beta (thrb) of Danio rerio (Zebrafish).